Reading from the N-terminus, the 334-residue chain is Aspartate carbamoyltransferase catalytic subunit (334 aa).

Residues arginine 71 and threonine 72 each coordinate carbamoyl phosphate. Lysine 99 is a binding site for L-aspartate. Residues arginine 121, histidine 151, and glutamine 154 each coordinate carbamoyl phosphate. L-aspartate is bound by residues arginine 184 and arginine 239. Carbamoyl phosphate contacts are provided by glycine 280 and proline 281.

This sequence belongs to the aspartate/ornithine carbamoyltransferase superfamily. ATCase family. As to quaternary structure, heterododecamer (2C3:3R2) of six catalytic PyrB chains organized as two trimers (C3), and six regulatory PyrI chains organized as three dimers (R2).

The enzyme catalyses carbamoyl phosphate + L-aspartate = N-carbamoyl-L-aspartate + phosphate + H(+). The protein operates within pyrimidine metabolism; UMP biosynthesis via de novo pathway; (S)-dihydroorotate from bicarbonate: step 2/3. Catalyzes the condensation of carbamoyl phosphate and aspartate to form carbamoyl aspartate and inorganic phosphate, the committed step in the de novo pyrimidine nucleotide biosynthesis pathway. The chain is Aspartate carbamoyltransferase catalytic subunit from Pseudomonas putida (strain GB-1).